The following is a 311-amino-acid chain: Nudix hydrolase 9 (311 aa).

A Nudix hydrolase domain is found at 131-298; it reads SSPLGNGAVI…GFALYELMLQ (168 aa). The short motif at 192 to 213 is the Nudix box element; it reads LNKKVTQEMFDSIICEVVEETG. Mg(2+) contacts are provided by Glu207 and Glu211.

Belongs to the Nudix hydrolase family. The cofactor is Mg(2+). It depends on Mn(2+) as a cofactor. Expressed in roots, stems and leaves.

Its function is as follows. Probably mediates the hydrolysis of some nucleoside diphosphate derivatives. This chain is Nudix hydrolase 9 (NUDT9), found in Arabidopsis thaliana (Mouse-ear cress).